Here is a 959-residue protein sequence, read N- to C-terminus: Mitogen-activated protein kinase kinase kinase 13 (959 aa).

Residues 1–47 are disordered; sequence MANPQEHLSCSSLPHLPLTENKTSGGRNELAAMGNHPSPKLPEDPQE. A compositionally biased stretch (low complexity) spans 7–18; sequence HLSCSSLPHLPL. Residues 167–408 form the Protein kinase domain; the sequence is ISELQWLGSG…FRQTLMHLDI (242 aa). Residues 173-181 and Lys-194 contribute to the ATP site; that span reads LGSGAQGAV. Residue Asp-278 is the Proton acceptor of the active site. Leucine-zipper stretches follow at residues 432 to 453 and 485 to 506; these read VKKH…DEEL and LSAI…EQAV. Disordered regions lie at residues 533–599, 739–828, 842–902, and 927–959; these read KRKG…GSHS, GSLD…RQRP, SSEN…LSDK, and NPVQ…SATW. The span at 566–577 shows a compositional bias: polar residues; that stretch reads SPLSGSPKMSTA. The segment covering 581–593 has biased composition (basic residues); that stretch reads SRYRSKPRHRRGN. Polar residues-rich tracts occupy residues 754 to 774 and 780 to 790; these read DLSS…SERT and SGCQSGISHQF. A compositionally biased stretch (acidic residues) spans 808–820; sequence DSSEEEGEVDSEV. The segment covering 866–876 has biased composition (basic and acidic residues); the sequence is SANRRQDRLAE. Residues 934–943 show a composition bias toward acidic residues; sequence SDCDSSEGEC. Polar residues predominate over residues 947-959; sequence TVRTSKNYSSATW.

The protein belongs to the protein kinase superfamily. STE Ser/Thr protein kinase family. MAP kinase kinase kinase subfamily. As to quaternary structure, homodimer; forms dimers through the leucine-zipper motif. Interacts with the C-terminus of MAPK8IP1 through the kinase catalytic domain. Binds PRDX3. Associates with the IKK complex through the kinase domain. Requires Mg(2+) as cofactor. Post-translationally, autophosphorylated on serine and threonine residues.

It localises to the cytoplasm. Its subcellular location is the membrane. The enzyme catalyses L-seryl-[protein] + ATP = O-phospho-L-seryl-[protein] + ADP + H(+). It carries out the reaction L-threonyl-[protein] + ATP = O-phospho-L-threonyl-[protein] + ADP + H(+). Its activity is regulated as follows. Activated by autophosphorylation and homodimerization. Its function is as follows. Activates the JUN N-terminal pathway through activation of the MAP kinase kinase MAP2K7. Acts synergistically with PRDX3 to regulate the activation of NF-kappa-B in the cytosol. This activation is kinase-dependent and involves activating the IKK complex, the IKBKB-containing complex that phosphorylates inhibitors of NF-kappa-B. The chain is Mitogen-activated protein kinase kinase kinase 13 (Map3k13) from Mus musculus (Mouse).